The following is a 618-amino-acid chain: Chaperone protein DnaK (618 aa).

Threonine 175 is modified (phosphothreonine; by autocatalysis). The tract at residues 579–618 (GAPGAEGFDSNMAGEANAGQNANNDDNVVDADYKVEDDEK) is disordered. Over residues 591-604 (AGEANAGQNANNDD) the composition is skewed to low complexity.

Belongs to the heat shock protein 70 family.

Acts as a chaperone. The sequence is that of Chaperone protein DnaK from Clostridium tetani (strain Massachusetts / E88).